The primary structure comprises 442 residues: tRNA modification GTPase MnmE (442 aa).

Residues Arg22, Glu79, and Lys119 each coordinate (6S)-5-formyl-5,6,7,8-tetrahydrofolate. In terms of domain architecture, TrmE-type G spans 216 to 366 (GIKTCLVGAP…LLEKIKSIFA (151 aa)). Asn226 serves as a coordination point for K(+). GTP is bound by residues 226 to 231 (NSGKSS), 245 to 251 (SEIPGTT), and 270 to 273 (DTAG). Ser230 contributes to the Mg(2+) binding site. K(+)-binding residues include Ser245, Ile247, and Thr250. Residue Thr251 participates in Mg(2+) binding. Lys442 is a (6S)-5-formyl-5,6,7,8-tetrahydrofolate binding site.

Belongs to the TRAFAC class TrmE-Era-EngA-EngB-Septin-like GTPase superfamily. TrmE GTPase family. As to quaternary structure, homodimer. Heterotetramer of two MnmE and two MnmG subunits. The cofactor is K(+).

It localises to the cytoplasm. In terms of biological role, exhibits a very high intrinsic GTPase hydrolysis rate. Involved in the addition of a carboxymethylaminomethyl (cmnm) group at the wobble position (U34) of certain tRNAs, forming tRNA-cmnm(5)s(2)U34. The sequence is that of tRNA modification GTPase MnmE from Mesomycoplasma hyopneumoniae (strain 7448) (Mycoplasma hyopneumoniae).